A 191-amino-acid chain; its full sequence is Octanoyltransferase (191 aa).

The 176-residue stretch at 10–185 (ENSHDEIWLV…NILALLNNPP (176 aa)) folds into the BPL/LPL catalytic domain. Substrate is bound by residues 49-56 (RGGQVTYH), 116-118 (SLG), and 129-131 (GLA). Cys147 functions as the Acyl-thioester intermediate in the catalytic mechanism.

The protein belongs to the LipB family.

The protein resides in the cytoplasm. The catalysed reaction is octanoyl-[ACP] + L-lysyl-[protein] = N(6)-octanoyl-L-lysyl-[protein] + holo-[ACP] + H(+). Its pathway is protein modification; protein lipoylation via endogenous pathway; protein N(6)-(lipoyl)lysine from octanoyl-[acyl-carrier-protein]: step 1/2. In terms of biological role, catalyzes the transfer of endogenously produced octanoic acid from octanoyl-acyl-carrier-protein onto the lipoyl domains of lipoate-dependent enzymes. Lipoyl-ACP can also act as a substrate although octanoyl-ACP is likely to be the physiological substrate. The polypeptide is Octanoyltransferase (Salmonella choleraesuis (strain SC-B67)).